The sequence spans 223 residues: Neurotrophic factor BDNF precursor form (223 aa).

The signal sequence occupies residues 1–5; it reads SCMKA. Positions 6–114 are excised as a propeptide; it reads APMKEVGVRG…AANMSXRVRR (109 aa). The N-linked (GlcNAc...) asparagine glycan is linked to Asn107. Cystine bridges form between Cys127–Cys194 and Cys172–Cys223.

Belongs to the NGF-beta family.

It localises to the secreted. Its function is as follows. Promotes the survival of neuronal populations that are all located either in the central nervous system or directly connected to it. This Eryx jayakari (Arabian sand boa) protein is Neurotrophic factor BDNF precursor form (BDNF).